The primary structure comprises 425 residues: tRNA(Met) cytidine acetate ligase (425 aa).

Residues 7–20 (VVEYNPFHFGHLHH), G102, N162, and 187–188 (RI) contribute to the ATP site.

Belongs to the TmcAL family.

The protein localises to the cytoplasm. It catalyses the reaction cytidine(34) in elongator tRNA(Met) + acetate + ATP = N(4)-acetylcytidine(34) in elongator tRNA(Met) + AMP + diphosphate. Catalyzes the formation of N(4)-acetylcytidine (ac(4)C) at the wobble position of elongator tRNA(Met), using acetate and ATP as substrates. First activates an acetate ion to form acetyladenylate (Ac-AMP) and then transfers the acetyl group to tRNA to form ac(4)C34. The chain is tRNA(Met) cytidine acetate ligase from Fervidobacterium nodosum (strain ATCC 35602 / DSM 5306 / Rt17-B1).